A 682-amino-acid polypeptide reads, in one-letter code: Potassium-transporting ATPase ATP-binding subunit (682 aa).

The next 4 membrane-spanning stretches (helical) occupy residues 34-54, 62-82, 219-239, and 254-274; these read PVMF…IAMA, ALFS…ANFA, IALT…TATL, and VLVA…LSAI. Catalysis depends on D307, which acts as the 4-aspartylphosphate intermediate. ATP contacts are provided by residues D344, E348, 377 to 384, and K395; that span reads FTAQSRMS. Mg(2+) is bound by residues D518 and D522. A run of 3 helical transmembrane segments spans residues 588-608, 616-636, and 656-676; these read FAII…LNIM, AILS…PLAL, and IYGL…DLLL.

It belongs to the cation transport ATPase (P-type) (TC 3.A.3) family. Type IA subfamily. As to quaternary structure, the system is composed of three essential subunits: KdpA, KdpB and KdpC.

It is found in the cell inner membrane. It carries out the reaction K(+)(out) + ATP + H2O = K(+)(in) + ADP + phosphate + H(+). Its function is as follows. Part of the high-affinity ATP-driven potassium transport (or Kdp) system, which catalyzes the hydrolysis of ATP coupled with the electrogenic transport of potassium into the cytoplasm. This subunit is responsible for energy coupling to the transport system and for the release of the potassium ions to the cytoplasm. The protein is Potassium-transporting ATPase ATP-binding subunit of Escherichia coli O8 (strain IAI1).